The following is a 368-amino-acid chain: Alanine racemase (368 aa).

The Proton acceptor; specific for D-alanine role is filled by K40. Residue K40 is modified to N6-(pyridoxal phosphate)lysine. R136 is a substrate binding site. Y263 acts as the Proton acceptor; specific for L-alanine in catalysis. Residue M310 participates in substrate binding.

The protein belongs to the alanine racemase family. Pyridoxal 5'-phosphate serves as cofactor.

It catalyses the reaction L-alanine = D-alanine. The protein operates within amino-acid biosynthesis; D-alanine biosynthesis; D-alanine from L-alanine: step 1/1. Catalyzes the interconversion of L-alanine and D-alanine. May also act on other amino acids. This chain is Alanine racemase (alr), found in Streptococcus uberis (strain ATCC BAA-854 / 0140J).